We begin with the raw amino-acid sequence, 238 residues long: MNVTLFVTCLVDLFHVNVGKATVELLERLGCTIHFPEAQTCCGQPAYNSGYVKEAKEAMKHMIRTFEHAEYIVTPSGSCATMFKEYPHIFKGDGEWEARAKRVADKTYELTQFIVDVLQVEDVGARLEGKATYHTSCHMTRLLGVKDAPLTLLQHVKGLEVVPLPNAHNCCGFGGTFSVKMGPISEQMVDEKIQCIEQVEADYLIGADCGCLMNIGGRIERKGKPIRVMHIAEVLNHR.

Belongs to the LutA/YkgE family.

Its function is as follows. Is involved in L-lactate degradation and allows cells to grow with lactate as the sole carbon source. This is Lactate utilization protein A from Anoxybacillus flavithermus (strain DSM 21510 / WK1).